Reading from the N-terminus, the 112-residue chain is UPF0122 protein CPF_1968 (112 aa).

This sequence belongs to the UPF0122 family.

Functionally, might take part in the signal recognition particle (SRP) pathway. This is inferred from the conservation of its genetic proximity to ftsY/ffh. May be a regulatory protein. In Clostridium perfringens (strain ATCC 13124 / DSM 756 / JCM 1290 / NCIMB 6125 / NCTC 8237 / Type A), this protein is UPF0122 protein CPF_1968.